Here is a 710-residue protein sequence, read N- to C-terminus: DNA polymerase epsilon subunit B (710 aa).

Residues 116–167 (FLKRPNSPTDTEITTLSQGSATSVVNPDSHSPMMLEEGSPINSDSEPISEHE) form a disordered region. The span at 121–144 (NSPTDTEITTLSQGSATSVVNPDS) shows a compositional bias: polar residues.

This sequence belongs to the DNA polymerase epsilon subunit B family. As to quaternary structure, heterotetramer. Consists of four subunits: POL2, DPB2, DPB3 and DPB4.

It is found in the nucleus. In terms of biological role, as accessory component of the DNA polymerase epsilon (DNA polymerase II) participates in chromosomal DNA replication. The sequence is that of DNA polymerase epsilon subunit B (DPB2) from Kluyveromyces lactis (strain ATCC 8585 / CBS 2359 / DSM 70799 / NBRC 1267 / NRRL Y-1140 / WM37) (Yeast).